We begin with the raw amino-acid sequence, 307 residues long: NmrA-like family domain-containing oxidoreductase flvB (307 aa).

NADP(+)-binding positions include 4 to 9 (LITGAT), 32 to 36 (SSSSP), 53 to 54 (DY), 74 to 76 (STN), and 148 to 151 (YVEG).

It belongs to the NmrA-type oxidoreductase family.

The enzyme catalyses (2S)-5,5-dimethyl-2,3,4,5-tetrahydropyridine-2,6-dicarboxylate + NADPH + 2 H(+) = (6S)-3,3-dimethylpiperidine-2,6-dicarboxylate + NADP(+). The catalysed reaction is (2S)-5,5-dimethyl-2,3,4,5-tetrahydropyridine-2,6-dicarboxylate + NADH + 2 H(+) = (6S)-3,3-dimethylpiperidine-2,6-dicarboxylate + NAD(+). It participates in secondary metabolite biosynthesis; terpenoid biosynthesis. Its function is as follows. NmrA-like family domain-containing oxidoreductase; part of the gene cluster that mediates the biosynthesis of flavunoidine, an alkaloidal terpenoid with a tetracyclic cage-like core connected to dimethylcadaverine via a C-N bond and acylated with 5,5-dimethyl-L-pipecolate. The tetracyclic core is synthesized by the terpene cyclase flvE and the cytochrome P450 monooxygenase flvD. The terpene cyclase flvE catalyzes the cyclization of farnesyl pyrophosphate (FPP) to form (1R,4R,5S)-(+)-acoradiene and the cytochrome P450 monooxygenase flvD is then responsible for oxidative conversion of (1R,4R,5S)-(+)-acoradiene into the tetracyclic cage present in the final product flavunoidine. In parallel, the N-methyltransferase flvH dimethylates L-lysine to give N,N-dimethyl-L-Lysin which is decarboxylated by flvG to afford dimethylcadaverine. The terpene cyclase-like protein flvF is the enzyme that attaches the dimethylcadaverine precusor at the C-7 of the tetracyclic cage to yield pre-flavunoidine. The cytochrome monooxygenase flvC hydroxylates the C-10 position of pre-flavunoidine whereas the NRPS flvI acylates the terpenoid core at the hydroxylated C-10 with dimethylpipecolate to yield final flavunoidine. The bifunctional enzyme flvA and the dehydrogenase flvB are responsible for the synthesis of the dimethylpipecolate precursor. The PLP-dependent lyase domain of flvA might use L-O-acetyl-homoserine and alpha-keto-isovalerate to form an intermediary ketone that can cyclize intramolecularly to yield an imine. The imine can be reduced by flvB to yield the 6-carboxylated pipecolate. The C-terminal alpha-KG-dependent oxygenase domain of flvA is then proposed to catalyze the decarboxylation to yield dimethylpipecolate. The sequence is that of NmrA-like family domain-containing oxidoreductase flvB from Aspergillus flavus (strain ATCC 200026 / FGSC A1120 / IAM 13836 / NRRL 3357 / JCM 12722 / SRRC 167).